The primary structure comprises 325 residues: Eukaryotic translation initiation factor 3 subunit I (325 aa).

WD repeat units lie at residues 8-47 (GHER…RLGT), 50-91 (GHTG…ALLK), 144-183 (CNDS…VLVN), and 186-225 (EHSR…HQKT). Phosphothreonine is present on Thr219. At Lys264 the chain carries N6-acetyllysine. Lys282 participates in a covalent cross-link: Glycyl lysine isopeptide (Lys-Gly) (interchain with G-Cter in ubiquitin). The WD 5 repeat unit spans residues 283–324 (GHFGPINSVAFHPDGKSYSSGGEDGYVRIHYFDPQYFEFEFE). Position 308 is a phosphotyrosine (Tyr308).

This sequence belongs to the eIF-3 subunit I family. As to quaternary structure, component of the eukaryotic translation initiation factor 3 (eIF-3) complex, which is composed of 13 subunits: EIF3A, EIF3B, EIF3C, EIF3D, EIF3E, EIF3F, EIF3G, EIF3H, EIF3I, EIF3J, EIF3K, EIF3L and EIF3M. The eIF-3 complex appears to include 3 stable modules: module A is composed of EIF3A, EIF3B, EIF3G and EIF3I; module B is composed of EIF3F, EIF3H, and EIF3M; and module C is composed of EIF3C, EIF3D, EIF3E, EIF3K and EIF3L. EIF3C of module C binds EIF3B of module A and EIF3H of module B, thereby linking the three modules. EIF3J is a labile subunit that binds to the eIF-3 complex via EIF3B. The eIF-3 complex interacts with RPS6KB1 under conditions of nutrient depletion. Mitogenic stimulation leads to binding and activation of a complex composed of MTOR and RPTOR, leading to phosphorylation and release of RPS6KB1 and binding of EIF4B to eIF-3. Phosphorylated by TGF-beta type II receptor.

The protein resides in the cytoplasm. Component of the eukaryotic translation initiation factor 3 (eIF-3) complex, which is required for several steps in the initiation of protein synthesis. The eIF-3 complex associates with the 40S ribosome and facilitates the recruitment of eIF-1, eIF-1A, eIF-2:GTP:methionyl-tRNAi and eIF-5 to form the 43S pre-initiation complex (43S PIC). The eIF-3 complex stimulates mRNA recruitment to the 43S PIC and scanning of the mRNA for AUG recognition. The eIF-3 complex is also required for disassembly and recycling of post-termination ribosomal complexes and subsequently prevents premature joining of the 40S and 60S ribosomal subunits prior to initiation. The eIF-3 complex specifically targets and initiates translation of a subset of mRNAs involved in cell proliferation, including cell cycling, differentiation and apoptosis, and uses different modes of RNA stem-loop binding to exert either translational activation or repression. This Bos taurus (Bovine) protein is Eukaryotic translation initiation factor 3 subunit I.